The sequence spans 94 residues: Ribonuclease VapC3 (94 aa).

D6 is a binding site for Mg(2+).

The protein belongs to the PINc/VapC protein family. The cofactor is Mg(2+).

Toxic component of a type II toxin-antitoxin (TA) system. An RNase. Its cognate antitoxin is VapB3. The sequence is that of Ribonuclease VapC3 (vapC3) from Methanocaldococcus jannaschii (strain ATCC 43067 / DSM 2661 / JAL-1 / JCM 10045 / NBRC 100440) (Methanococcus jannaschii).